The sequence spans 261 residues: Ribonuclease PH (261 aa).

Phosphate contacts are provided by residues R87 and 125–127 (GTR).

The protein belongs to the RNase PH family. Homohexameric ring arranged as a trimer of dimers.

It carries out the reaction tRNA(n+1) + phosphate = tRNA(n) + a ribonucleoside 5'-diphosphate. In terms of biological role, phosphorolytic 3'-5' exoribonuclease that plays an important role in tRNA 3'-end maturation. Removes nucleotide residues following the 3'-CCA terminus of tRNAs; can also add nucleotides to the ends of RNA molecules by using nucleoside diphosphates as substrates, but this may not be physiologically important. Probably plays a role in initiation of 16S rRNA degradation (leading to ribosome degradation) during starvation. The sequence is that of Ribonuclease PH from Desulforudis audaxviator (strain MP104C).